A 442-amino-acid polypeptide reads, in one-letter code: C4-dicarboxylate transport protein 4 (442 aa).

Transmembrane regions (helical) follow at residues 20 to 40 (ILYVQVLIAIVLGVLIGYFYP), 53 to 73 (FIALIKMMIAPVIFCTVVHGI), 90 to 110 (LIYFESVSTVALAVGLLVGEV), 160 to 180 (GDLLQVLLISILSGFAIAFLG), 209 to 229 (PVGAFGAMAFTVGAYGLGSLL), and 233 to 253 (ALIGTFYLTSILFVLIVLGAI).

It belongs to the dicarboxylate/amino acid:cation symporter (DAACS) (TC 2.A.23) family.

The protein localises to the cell inner membrane. Functionally, responsible for the transport of dicarboxylates such as succinate, fumarate, and malate from the periplasm across the membrane. In Bradyrhizobium diazoefficiens (strain JCM 10833 / BCRC 13528 / IAM 13628 / NBRC 14792 / USDA 110), this protein is C4-dicarboxylate transport protein 4.